Consider the following 378-residue polypeptide: Chaperone protein DnaJ (378 aa).

The J domain occupies 5 to 70 (DFYEILGVSK…EKRSAYDRMG (66 aa)). The CR-type zinc-finger motif lies at 137–215 (GCKKEISFTA…CHGNGVKDKS (79 aa)). Zn(2+) contacts are provided by Cys150, Cys153, Cys167, Cys170, Cys189, Cys192, Cys203, and Cys206. 4 CXXCXGXG motif repeats span residues 150–157 (CDTCDGKG), 167–174 (CQTCHGQG), 189–196 (CPHCGGTG), and 203–210 (CSDCHGNG).

The protein belongs to the DnaJ family. Homodimer. Zn(2+) is required as a cofactor.

It localises to the cytoplasm. In terms of biological role, participates actively in the response to hyperosmotic and heat shock by preventing the aggregation of stress-denatured proteins and by disaggregating proteins, also in an autonomous, DnaK-independent fashion. Unfolded proteins bind initially to DnaJ; upon interaction with the DnaJ-bound protein, DnaK hydrolyzes its bound ATP, resulting in the formation of a stable complex. GrpE releases ADP from DnaK; ATP binding to DnaK triggers the release of the substrate protein, thus completing the reaction cycle. Several rounds of ATP-dependent interactions between DnaJ, DnaK and GrpE are required for fully efficient folding. Also involved, together with DnaK and GrpE, in the DNA replication of plasmids through activation of initiation proteins. In Psychrobacter cryohalolentis (strain ATCC BAA-1226 / DSM 17306 / VKM B-2378 / K5), this protein is Chaperone protein DnaJ.